The following is a 427-amino-acid chain: Enolase (427 aa).

Residue glutamine 163 coordinates (2R)-2-phosphoglycerate. Catalysis depends on glutamate 205, which acts as the Proton donor. Residues aspartate 242, glutamate 285, and aspartate 312 each contribute to the Mg(2+) site. (2R)-2-phosphoglycerate contacts are provided by lysine 337, arginine 366, serine 367, and lysine 388. Lysine 337 acts as the Proton acceptor in catalysis.

This sequence belongs to the enolase family. Mg(2+) is required as a cofactor.

The protein resides in the cytoplasm. Its subcellular location is the secreted. The protein localises to the cell surface. The catalysed reaction is (2R)-2-phosphoglycerate = phosphoenolpyruvate + H2O. It participates in carbohydrate degradation; glycolysis; pyruvate from D-glyceraldehyde 3-phosphate: step 4/5. Catalyzes the reversible conversion of 2-phosphoglycerate (2-PG) into phosphoenolpyruvate (PEP). It is essential for the degradation of carbohydrates via glycolysis. The chain is Enolase from Dechloromonas aromatica (strain RCB).